The sequence spans 284 residues: RNA polymerase sigma factor RpoH (284 aa).

Residues 53 to 122 (LILSHLRFVI…IHEYVLRNWR (70 aa)) are sigma-70 factor domain-2. The Interaction with polymerase core subunit RpoC motif lies at 77 to 80 (DLIQ). Positions 228 to 280 (ALLRLDERSRHIIHARWLDKNKKNTLQNIANNYGISAERVRQLEKNAMKKLKL) are sigma-70 factor domain-4. The H-T-H motif DNA-binding region spans 253 to 272 (LQNIANNYGISAERVRQLEK).

It belongs to the sigma-70 factor family. RpoH subfamily. As to quaternary structure, interacts with the RNA polymerase core enzyme.

Its subcellular location is the cytoplasm. Sigma factors are initiation factors that promote the attachment of RNA polymerase to specific initiation sites and are then released. This sigma factor is involved in regulation of expression of heat shock genes. This Buchnera aphidicola subsp. Acyrthosiphon pisum (strain APS) (Acyrthosiphon pisum symbiotic bacterium) protein is RNA polymerase sigma factor RpoH.